We begin with the raw amino-acid sequence, 51 residues long: UPF0337 protein NE0131 (51 aa).

Belongs to the UPF0337 (CsbD) family.

This chain is UPF0337 protein NE0131, found in Nitrosomonas europaea (strain ATCC 19718 / CIP 103999 / KCTC 2705 / NBRC 14298).